We begin with the raw amino-acid sequence, 478 residues long: Cysteine--tRNA ligase (478 aa).

Cys29 is a binding site for Zn(2+). The 'HIGH' region signature appears at Pro31–Asn41. Positions 216, 241, and 245 each coordinate Zn(2+). A 'KMSKS' region motif is present at residues Lys274–Ser278. Lys277 provides a ligand contact to ATP.

Belongs to the class-I aminoacyl-tRNA synthetase family. As to quaternary structure, monomer. The cofactor is Zn(2+).

The protein localises to the cytoplasm. It catalyses the reaction tRNA(Cys) + L-cysteine + ATP = L-cysteinyl-tRNA(Cys) + AMP + diphosphate. This Orientia tsutsugamushi (strain Ikeda) (Rickettsia tsutsugamushi) protein is Cysteine--tRNA ligase.